The sequence spans 137 residues: Large ribosomal subunit protein uL16c (137 aa).

Belongs to the universal ribosomal protein uL16 family. As to quaternary structure, part of the 50S ribosomal subunit.

It is found in the plastid. Its subcellular location is the chloroplast. This Trieres chinensis (Marine centric diatom) protein is Large ribosomal subunit protein uL16c.